Here is a 502-residue protein sequence, read N- to C-terminus: 4-hydroxy-3-methylbut-2-enyl diphosphate reductase, chloroplastic (502 aa).

The N-terminal 48 residues, 1-48 (MQVLPQTRVQGVPSGRNLSCSKAVGGTPLRALTRDVVRPARSVNVHVV), are a transit peptide targeting the chloroplast. [4Fe-4S] cluster is bound at residue Cys140. His170 serves as a coordination point for (2E)-4-hydroxy-3-methylbut-2-enyl diphosphate. Residue Cys232 participates in [4Fe-4S] cluster binding. His260 lines the (2E)-4-hydroxy-3-methylbut-2-enyl diphosphate pocket. Glu262 serves as the catalytic Proton donor. Position 325 (Thr325) interacts with (2E)-4-hydroxy-3-methylbut-2-enyl diphosphate. A [4Fe-4S] cluster-binding site is contributed by Cys363. (2E)-4-hydroxy-3-methylbut-2-enyl diphosphate is bound by residues 398–400 (SSN) and Ser461.

The protein belongs to the IspH family. As to quaternary structure, homodimer. [4Fe-4S] cluster serves as cofactor.

The protein localises to the plastid. It localises to the chloroplast stroma. The enzyme catalyses dimethylallyl diphosphate + 2 oxidized [2Fe-2S]-[ferredoxin] + H2O = (2E)-4-hydroxy-3-methylbut-2-enyl diphosphate + 2 reduced [2Fe-2S]-[ferredoxin] + 2 H(+). The catalysed reaction is isopentenyl diphosphate + 2 oxidized [2Fe-2S]-[ferredoxin] + H2O = (2E)-4-hydroxy-3-methylbut-2-enyl diphosphate + 2 reduced [2Fe-2S]-[ferredoxin] + 2 H(+). It functions in the pathway isoprenoid biosynthesis; dimethylallyl diphosphate biosynthesis; dimethylallyl diphosphate from (2E)-4-hydroxy-3-methylbutenyl diphosphate: step 1/1. It participates in isoprenoid biosynthesis; isopentenyl diphosphate biosynthesis via DXP pathway; isopentenyl diphosphate from 1-deoxy-D-xylulose 5-phosphate: step 6/6. Functionally, enzyme of the plastid non-mevalonate pathway for isoprenoid biosynthesis that converts 1-hydroxy-2-methyl-2-(E)-butenyl 4-diphosphate into isopentenyl diphosphate (IPP) and dimethylallyl diphosphate (DMAPP). The protein is 4-hydroxy-3-methylbut-2-enyl diphosphate reductase, chloroplastic of Botryococcus braunii (Green alga).